The following is a 418-amino-acid chain: Glutamyl-tRNA reductase (418 aa).

Substrate is bound by residues 49 to 52 (TCNR), serine 109, 114 to 116 (EPQ), and glutamine 120. Residue cysteine 50 is the Nucleophile of the active site. 189-194 (GAGETI) is a binding site for NADP(+).

Belongs to the glutamyl-tRNA reductase family. In terms of assembly, homodimer.

It carries out the reaction (S)-4-amino-5-oxopentanoate + tRNA(Glu) + NADP(+) = L-glutamyl-tRNA(Glu) + NADPH + H(+). It functions in the pathway porphyrin-containing compound metabolism; protoporphyrin-IX biosynthesis; 5-aminolevulinate from L-glutamyl-tRNA(Glu): step 1/2. Functionally, catalyzes the NADPH-dependent reduction of glutamyl-tRNA(Glu) to glutamate 1-semialdehyde (GSA). The chain is Glutamyl-tRNA reductase from Escherichia coli O157:H7.